A 98-amino-acid polypeptide reads, in one-letter code: uncharacterized protein (98 aa).

This is an uncharacterized protein from Ureaplasma parvum serovar 3 (strain ATCC 700970).